The chain runs to 119 residues: Large ribosomal subunit protein uL18 (119 aa).

Belongs to the universal ribosomal protein uL18 family. As to quaternary structure, part of the 50S ribosomal subunit; part of the 5S rRNA/L5/L18/L25 subcomplex. Contacts the 5S and 23S rRNAs.

In terms of biological role, this is one of the proteins that bind and probably mediate the attachment of the 5S RNA into the large ribosomal subunit, where it forms part of the central protuberance. This Chlorobium luteolum (strain DSM 273 / BCRC 81028 / 2530) (Pelodictyon luteolum) protein is Large ribosomal subunit protein uL18.